Consider the following 28-residue polypeptide: Ranatuerin-2BYb (28 aa).

Residues C23 and C28 are joined by a disulfide bond.

In terms of tissue distribution, expressed by the skin glands.

The protein localises to the secreted. Functionally, antibacterial activity against Gram-negative bacterium E.coli. Very weak hemolysis activity. This Rana boylii (Foothill yellow-legged frog) protein is Ranatuerin-2BYb.